The primary structure comprises 510 residues: MKNKLKILQIGSIDWSKEVVIPDNMDWYYFFSLTLRLAIKKVMEMEKINHFSAIIVDDLDLIPDLFLIESRIIPYTIFYSKKQQAIQEPIAFFLKRYCAQQIDLSDRPNLLRKLSKALFRGQYGDKMTPLDMVVSPGFKGRICHNGYENLELEGNFGSDFRPIVSWKYNIVASKKNPVEIWLEYEKDLSCELRLRIYNIQEGSAADLVRESVFSETDMEETIVLDNDFTSFLGITLEARGFGTLKIGAFHQRLTRYQFGKFVLGGKILKDSHRQEINYFFYPGDFKPPLVVYFSGYRRAEGFEGFGMMRGLGCPFLLISDQRLDGGVFYLGSDELEEGIRRIIQEHMELLGFSERELILSGISMGTYGAAYYGADFSPRAIILCKPLANLGTIAQRGRLRLPEVFPMALDILHRHTGGKDRENVMELDNRYWKKFKKADFSRTIFGLAYMKEEDYDPTAYEDLVQYLYPTETQLMSNGLSGRHNDDSTMVINWFMNYHRIILEKEFGRKK.

This sequence belongs to the accessory Sec system protein Asp2 family. In terms of assembly, part of the accessory SecA2/SecY2 protein translocation apparatus required to export cell wall protein GspB. Binds the Ser-rich domains (SSR1 and SSR2) of non-glycosylated GspB, binds much less to glycosylated protein.

Functionally, part of the accessory SecA2/SecY2 system specifically required to export GspB, a serine-rich repeat cell wall protein encoded upstream in the same operon. The chain is Accessory Sec system protein Asp2 (asp2) from Streptococcus gordonii.